The following is a 544-amino-acid chain: CTP synthase (544 aa).

Residues 1-266 (MKKRFIFITG…DQIICHHFKL (266 aa)) form an amidoligase domain region. S14 lines the CTP pocket. S14 lines the UTP pocket. Residues 15-20 (SLGKGI) and D72 each bind ATP. Positions 72 and 140 each coordinate Mg(2+). CTP is bound by residues 147 to 149 (DIE), 187 to 192 (KTKPTQ), and K223. Residues 187 to 192 (KTKPTQ) and K223 contribute to the UTP site. The 251-residue stretch at 291-541 (TIGIIGKYIK…IKAAIQYKKI (251 aa)) folds into the Glutamine amidotransferase type-1 domain. G352 serves as a coordination point for L-glutamine. C379 acts as the Nucleophile; for glutamine hydrolysis in catalysis. Residues 380-383 (LGMQ), E403, and R469 each bind L-glutamine. Residues H514 and E516 contribute to the active site.

This sequence belongs to the CTP synthase family. In terms of assembly, homotetramer.

It catalyses the reaction UTP + L-glutamine + ATP + H2O = CTP + L-glutamate + ADP + phosphate + 2 H(+). The catalysed reaction is L-glutamine + H2O = L-glutamate + NH4(+). The enzyme catalyses UTP + NH4(+) + ATP = CTP + ADP + phosphate + 2 H(+). It participates in pyrimidine metabolism; CTP biosynthesis via de novo pathway; CTP from UDP: step 2/2. Allosterically activated by GTP, when glutamine is the substrate; GTP has no effect on the reaction when ammonia is the substrate. The allosteric effector GTP functions by stabilizing the protein conformation that binds the tetrahedral intermediate(s) formed during glutamine hydrolysis. Inhibited by the product CTP, via allosteric rather than competitive inhibition. Catalyzes the ATP-dependent amination of UTP to CTP with either L-glutamine or ammonia as the source of nitrogen. Regulates intracellular CTP levels through interactions with the four ribonucleotide triphosphates. This is CTP synthase from Buchnera aphidicola subsp. Baizongia pistaciae (strain Bp).